The chain runs to 23 residues: Maculatin-1.2 (23 aa).

Alanine amide is present on A23.

In terms of tissue distribution, expressed by the skin dorsal glands.

It is found in the secreted. In terms of biological role, shows antibacterial activity against S.aureus and S.uberis. This chain is Maculatin-1.2, found in Ranoidea genimaculata (Brown-spotted tree frog).